The primary structure comprises 181 residues: Shikimate kinase 2 (181 aa).

Residue 12-17 participates in ATP binding; sequence GCGKTT. Positions 16 and 32 each coordinate Mg(2+). Substrate-binding residues include Asp34, Arg58, and Gly79. The LID domain stretch occupies residues 112–126; sequence EAEPEVGLRPTLTGK. Arg120 contributes to the ATP binding site. Substrate is bound at residue Arg139.

It belongs to the shikimate kinase family. AroL subfamily. In terms of assembly, monomer. It depends on Mg(2+) as a cofactor.

The protein localises to the cytoplasm. It carries out the reaction shikimate + ATP = 3-phosphoshikimate + ADP + H(+). Its pathway is metabolic intermediate biosynthesis; chorismate biosynthesis; chorismate from D-erythrose 4-phosphate and phosphoenolpyruvate: step 5/7. Catalyzes the specific phosphorylation of the 3-hydroxyl group of shikimic acid using ATP as a cosubstrate. The sequence is that of Shikimate kinase 2 from Escherichia fergusonii (strain ATCC 35469 / DSM 13698 / CCUG 18766 / IAM 14443 / JCM 21226 / LMG 7866 / NBRC 102419 / NCTC 12128 / CDC 0568-73).